The sequence spans 1076 residues: Inositol-1,4,5-trisphosphate 5-phosphatase 1 (1076 aa).

The region spanning 144-474 (LRKLLTNGSF…GDALARIYTG (331 aa)) is the SAC domain. The interval 534 to 880 (YDPIHEYVNH…QEVRDASQTS (347 aa)) is catalytic. Disordered regions lie at residues 930–958 (AAPP…DWIS) and 977–1076 (LSPA…KPLV). 2 stretches are compositionally biased toward low complexity: residues 977-1004 (LSPA…IKPN) and 1025-1040 (SGSS…LTPV). Polar residues predominate over residues 1065–1076 (PEESSISWKPLV).

The protein belongs to the synaptojanin family. In the central section; belongs to the inositol 1,4,5-trisphosphate 5-phosphatase family. Mg(2+) is required as a cofactor.

The protein localises to the cytoplasm. It carries out the reaction a 1,2-diacyl-sn-glycero-3-phospho-(1D-myo-inositol-4,5-bisphosphate) + H2O = a 1,2-diacyl-sn-glycero-3-phospho-(1D-myo-inositol 4-phosphate) + phosphate. Functionally, controls the cellular levels and subcellular distribution of phosphatidylinositol 3-phosphate and phosphatidylinositol 4,5-bisphosphate. Involved in distinct membrane trafficking and signal transduction pathways. Highly active against a range of soluble and lipid inositol phosphates. Active in dephosphorylating the 5-position of Ins(1,4,5)P3 and Ins(1,3,4,5)P4 and to a lesser extent Ins(1,4,5,6)P4. The enzyme is also active against PI(4,5)P2 presented in sonicated vesicles and Triton mixed micelles, and somewhat less active against PI(3,5)P2 in unilamellar vesicles. Activity against PI(3,5)P2 drops sharply when this substrate is presented in mixed micelles. Also hydrolyzes PIP3 to produce PI(3,4)P2. This chain is Inositol-1,4,5-trisphosphate 5-phosphatase 1 (syj1), found in Schizosaccharomyces pombe (strain 972 / ATCC 24843) (Fission yeast).